The primary structure comprises 277 residues: MAVKKFNPITPSRRQMTMPTFEEITSQQPEKSLLVSLKSKAGRNAQGKITVRHRGGGVKRKYRIIDFKRNKDSIPAKVATIEYDPNRSAYIALVVYTDGEKRYIIAPAGLKVGDVIVSGPDSDIKPGNALPLKNIPVGTVIHNIELQKGKGGQLVRSAGNSAQLMAKEGNYATLRLPSGEMRYVRIECRATIGTVSNPTNDIVNIGKAGRKRHMGWRPTVRGSVMNPNDHPHGGGEGKSPVGRPSPVTPWGKPALGYKTRKNKKYSDRFIIKGRNAK.

Residues 223 to 261 are disordered; the sequence is SVMNPNDHPHGGGEGKSPVGRPSPVTPWGKPALGYKTRK.

This sequence belongs to the universal ribosomal protein uL2 family. As to quaternary structure, part of the 50S ribosomal subunit. Forms a bridge to the 30S subunit in the 70S ribosome.

In terms of biological role, one of the primary rRNA binding proteins. Required for association of the 30S and 50S subunits to form the 70S ribosome, for tRNA binding and peptide bond formation. It has been suggested to have peptidyltransferase activity; this is somewhat controversial. Makes several contacts with the 16S rRNA in the 70S ribosome. This Clostridium botulinum (strain Alaska E43 / Type E3) protein is Large ribosomal subunit protein uL2.